Reading from the N-terminus, the 446-residue chain is tRNA-2-methylthio-N(6)-dimethylallyladenosine synthase (446 aa).

The 118-residue stretch at 3 to 120 (KKIYIKTFGC…LPEMLKQRRS (118 aa)) folds into the MTTase N-terminal domain. 6 residues coordinate [4Fe-4S] cluster: Cys-12, Cys-49, Cys-83, Cys-157, Cys-161, and Cys-164. The region spanning 143–375 (KVEGATAFVS…QAVIDQNTRR (233 aa)) is the Radical SAM core domain. The 67-residue stretch at 378–444 (DEMVGTVQRI…AYTLRGEIIV (67 aa)) folds into the TRAM domain.

It belongs to the methylthiotransferase family. MiaB subfamily. Monomer. [4Fe-4S] cluster serves as cofactor.

It is found in the cytoplasm. The catalysed reaction is N(6)-dimethylallyladenosine(37) in tRNA + (sulfur carrier)-SH + AH2 + 2 S-adenosyl-L-methionine = 2-methylsulfanyl-N(6)-dimethylallyladenosine(37) in tRNA + (sulfur carrier)-H + 5'-deoxyadenosine + L-methionine + A + S-adenosyl-L-homocysteine + 2 H(+). Catalyzes the methylthiolation of N6-(dimethylallyl)adenosine (i(6)A), leading to the formation of 2-methylthio-N6-(dimethylallyl)adenosine (ms(2)i(6)A) at position 37 in tRNAs that read codons beginning with uridine. The protein is tRNA-2-methylthio-N(6)-dimethylallyladenosine synthase of Janthinobacterium sp. (strain Marseille) (Minibacterium massiliensis).